The primary structure comprises 144 residues: Large ribosomal subunit protein uL11 (144 aa).

It belongs to the universal ribosomal protein uL11 family. As to quaternary structure, part of the ribosomal stalk of the 50S ribosomal subunit. Interacts with L10 and the large rRNA to form the base of the stalk. L10 forms an elongated spine to which L12 dimers bind in a sequential fashion forming a multimeric L10(L12)X complex. In terms of processing, one or more lysine residues are methylated.

Its function is as follows. Forms part of the ribosomal stalk which helps the ribosome interact with GTP-bound translation factors. The protein is Large ribosomal subunit protein uL11 of Deinococcus deserti (strain DSM 17065 / CIP 109153 / LMG 22923 / VCD115).